A 721-amino-acid polypeptide reads, in one-letter code: Pre-mRNA-splicing ATP-dependent RNA helicase PRP28 (721 aa).

The segment at 12-134 (KKAADTAAAK…SAEDIEATLL (123 aa)) is disordered. The span at 26–63 (PKAERERLAAEKAKKEEDDKKRKASEEEQKRKEEEQKW) shows a compositional bias: basic and acidic residues. A compositionally biased stretch (polar residues) spans 64-77 (RSNGSSRPNESNGS). The span at 88 to 104 (NDGRDDRERDRDRDQGR) shows a compositional bias: basic and acidic residues. The Q motif signature appears at 288–316 (RSWQESNLPQRLLNIVDDVGYKDPSPIQR). Residues 319–522 (IPIALQARDL…KKYLRRPAIV (204 aa)) form the Helicase ATP-binding domain. Position 332–339 (332–339 (AVTGSGKT)) interacts with ATP. Residues 445–448 (DEAD) carry the DEAD box motif. Positions 533–696 (TVEQRVEFVS…KVPEELRRHE (164 aa)) constitute a Helicase C-terminal domain. The tract at residues 685–721 (ISKVPEELRRHEAAQSKPVRGAKKDKDEGSGKGNWQH) is disordered. Basic and acidic residues predominate over residues 688-698 (VPEELRRHEAA).

This sequence belongs to the DEAD box helicase family. DDX23/PRP28 subfamily. As to quaternary structure, component of the U5 snRNP complex.

It localises to the cytoplasm. The protein localises to the nucleus. The enzyme catalyses ATP + H2O = ADP + phosphate + H(+). ATP-dependent RNA helicase involved in mRNA splicing. May destabilize the U1/5'-splice site duplex to permit an effective competition for the 5'-splice site by the U6 snRNA, resulting in the switch between U1 and U6 at the 5'-splice site. May also act to unwind the U4/U6 base-pairing interaction in the U4/U6/U5 snRNP, facilitating the first covalent step of splicing. The chain is Pre-mRNA-splicing ATP-dependent RNA helicase PRP28 (PRP28) from Gibberella zeae (strain ATCC MYA-4620 / CBS 123657 / FGSC 9075 / NRRL 31084 / PH-1) (Wheat head blight fungus).